Consider the following 214-residue polypeptide: Large ribosomal subunit protein bL25 (214 aa).

The interval 189-214 (IHASRKAKADEDEAAEGEEGEEGAED) is disordered. The span at 198–214 (DEDEAAEGEEGEEGAED) shows a compositional bias: acidic residues.

This sequence belongs to the bacterial ribosomal protein bL25 family. CTC subfamily. In terms of assembly, part of the 50S ribosomal subunit; part of the 5S rRNA/L5/L18/L25 subcomplex. Contacts the 5S rRNA. Binds to the 5S rRNA independently of L5 and L18.

This is one of the proteins that binds to the 5S RNA in the ribosome where it forms part of the central protuberance. The protein is Large ribosomal subunit protein bL25 of Alkalilimnicola ehrlichii (strain ATCC BAA-1101 / DSM 17681 / MLHE-1).